Consider the following 238-residue polypeptide: Membrane protein 2 (238 aa).

The protein belongs to the varicellovirus ORF2 protein family. Phosphorylated by host.

It localises to the host membrane. The protein is Membrane protein 2 of Varicella-zoster virus (strain Dumas) (HHV-3).